The following is a 263-amino-acid chain: Proline rich transmembrane protein 1B (263 aa).

Gly residues predominate over residues 1 to 17 (MEAGAGGAGSDTKGGGS). The disordered stretch occupies residues 1–107 (MEAGAGGAGS…IGFVGEPPPY (107 aa)). Low complexity-rich tracts occupy residues 37–47 (QMPAQPALPQL) and 75–86 (DAPAQAAGEAGP). Transmembrane regions (helical) follow at residues 190 to 210 (MMES…IAIV) and 238 to 258 (VLFS…YVVV).

The protein belongs to the CD225/Dispanin family.

It is found in the membrane. The sequence is that of Proline rich transmembrane protein 1B from Homo sapiens (Human).